Reading from the N-terminus, the 348-residue chain is Holliday junction branch migration complex subunit RuvB (348 aa).

The tract at residues 4–198 is large ATPase domain (RuvB-L); the sequence is TTDYGASNTG…FGFTAHLDFY (195 aa). ATP is bound by residues Leu37, Arg38, Gly79, Lys82, Thr83, Thr84, 145 to 147, Arg188, Tyr198, and Arg235; that span reads EDF. Residue Thr83 coordinates Mg(2+). A small ATPAse domain (RuvB-S) region spans residues 199-269; it reads PHEELEKLIE…DVKEALALYQ (71 aa). The segment at 272–348 is head domain (RuvB-H); it reads SEGLDRLDIA…DIIFGNYAQR (77 aa). The DNA site is built by Arg327 and Arg332.

This sequence belongs to the RuvB family. As to quaternary structure, homohexamer. Forms an RuvA(8)-RuvB(12)-Holliday junction (HJ) complex. HJ DNA is sandwiched between 2 RuvA tetramers; dsDNA enters through RuvA and exits via RuvB. An RuvB hexamer assembles on each DNA strand where it exits the tetramer. Each RuvB hexamer is contacted by two RuvA subunits (via domain III) on 2 adjacent RuvB subunits; this complex drives branch migration. In the full resolvosome a probable DNA-RuvA(4)-RuvB(12)-RuvC(2) complex forms which resolves the HJ.

It localises to the cytoplasm. The enzyme catalyses ATP + H2O = ADP + phosphate + H(+). In terms of biological role, the RuvA-RuvB-RuvC complex processes Holliday junction (HJ) DNA during genetic recombination and DNA repair, while the RuvA-RuvB complex plays an important role in the rescue of blocked DNA replication forks via replication fork reversal (RFR). RuvA specifically binds to HJ cruciform DNA, conferring on it an open structure. The RuvB hexamer acts as an ATP-dependent pump, pulling dsDNA into and through the RuvAB complex. RuvB forms 2 homohexamers on either side of HJ DNA bound by 1 or 2 RuvA tetramers; 4 subunits per hexamer contact DNA at a time. Coordinated motions by a converter formed by DNA-disengaged RuvB subunits stimulates ATP hydrolysis and nucleotide exchange. Immobilization of the converter enables RuvB to convert the ATP-contained energy into a lever motion, pulling 2 nucleotides of DNA out of the RuvA tetramer per ATP hydrolyzed, thus driving DNA branch migration. The RuvB motors rotate together with the DNA substrate, which together with the progressing nucleotide cycle form the mechanistic basis for DNA recombination by continuous HJ branch migration. Branch migration allows RuvC to scan DNA until it finds its consensus sequence, where it cleaves and resolves cruciform DNA. The chain is Holliday junction branch migration complex subunit RuvB from Bifidobacterium longum (strain DJO10A).